The chain runs to 164 residues: Phosphopantetheine adenylyltransferase (164 aa).

Ser-9 contributes to the substrate binding site. Residues 9-10 and His-17 contribute to the ATP site; that span reads SF. The substrate site is built by Lys-41, Leu-73, and Lys-87. ATP-binding positions include 88–90, Glu-98, and 123–129; these read GLR and YSYISSS.

It belongs to the bacterial CoaD family. As to quaternary structure, homohexamer. The cofactor is Mg(2+).

It is found in the cytoplasm. It catalyses the reaction (R)-4'-phosphopantetheine + ATP + H(+) = 3'-dephospho-CoA + diphosphate. It functions in the pathway cofactor biosynthesis; coenzyme A biosynthesis; CoA from (R)-pantothenate: step 4/5. Functionally, reversibly transfers an adenylyl group from ATP to 4'-phosphopantetheine, yielding dephospho-CoA (dPCoA) and pyrophosphate. This chain is Phosphopantetheine adenylyltransferase, found in Clostridium perfringens (strain ATCC 13124 / DSM 756 / JCM 1290 / NCIMB 6125 / NCTC 8237 / Type A).